Consider the following 336-residue polypeptide: GTPase Obg (336 aa).

Positions 1–159 (MKFLDQAKIY…RWVWLRLKLI (159 aa)) constitute an Obg domain. Residues 160 to 328 (ADIGLVGLPN…LLRLLQDRVT (169 aa)) enclose the OBG-type G domain. Residues 166–173 (GLPNAGKS), 191–195 (FTTLH), 213–216 (DIPG), 280–283 (NKCD), and 309–311 (SGA) each bind GTP. Mg(2+) is bound by residues S173 and T193.

Belongs to the TRAFAC class OBG-HflX-like GTPase superfamily. OBG GTPase family. In terms of assembly, monomer. Mg(2+) is required as a cofactor.

It localises to the cytoplasm. In terms of biological role, an essential GTPase which binds GTP, GDP and possibly (p)ppGpp with moderate affinity, with high nucleotide exchange rates and a fairly low GTP hydrolysis rate. Plays a role in control of the cell cycle, stress response, ribosome biogenesis and in those bacteria that undergo differentiation, in morphogenesis control. This is GTPase Obg from Gluconobacter oxydans (strain 621H) (Gluconobacter suboxydans).